A 375-amino-acid polypeptide reads, in one-letter code: Succinyl-diaminopimelate desuccinylase (375 aa).

Histidine 66 serves as a coordination point for Zn(2+). Aspartate 68 is a catalytic residue. Aspartate 99 contributes to the Zn(2+) binding site. Glutamate 133 acts as the Proton acceptor in catalysis. Positions 134, 162, and 348 each coordinate Zn(2+).

Belongs to the peptidase M20A family. DapE subfamily. Homodimer. It depends on Zn(2+) as a cofactor. The cofactor is Co(2+).

The catalysed reaction is N-succinyl-(2S,6S)-2,6-diaminopimelate + H2O = (2S,6S)-2,6-diaminopimelate + succinate. It participates in amino-acid biosynthesis; L-lysine biosynthesis via DAP pathway; LL-2,6-diaminopimelate from (S)-tetrahydrodipicolinate (succinylase route): step 3/3. Catalyzes the hydrolysis of N-succinyl-L,L-diaminopimelic acid (SDAP), forming succinate and LL-2,6-diaminopimelate (DAP), an intermediate involved in the bacterial biosynthesis of lysine and meso-diaminopimelic acid, an essential component of bacterial cell walls. This is Succinyl-diaminopimelate desuccinylase from Teredinibacter turnerae (strain ATCC 39867 / T7901).